Reading from the N-terminus, the 514-residue chain is Na(+)/H(+) antiporter NhaB (514 aa).

Transmembrane regions (helical) follow at residues 13 to 33, 34 to 54, 96 to 116, 136 to 156, 203 to 223, 236 to 256, 304 to 324, 349 to 369, 392 to 412, 448 to 468, and 479 to 499; these read FMGNSPDWYKLAIITFLIINP, LIFFFVDPFIAGWLLVVEFIF, VILLLVFMVAGIYFMKQLLLF, CFASAFLSAFLDALTVIAVVI, LMMHAGVGTALGGVMTMVGEP, FVTFFIRMSPVTIPVFFAGLA, ALIGIWLIVALALHLAEVGII, EEALPFTALLTVFFSVVAVII, LFYLFNGLLSAISDNVFVGTV, ATPNGQAAFLFLLTSALSPLI, and ALPYTIVMTLLGLLAVEFWLV.

It belongs to the NhaB Na(+)/H(+) (TC 2.A.34) antiporter family.

Its subcellular location is the cell inner membrane. The enzyme catalyses 2 Na(+)(in) + 3 H(+)(out) = 2 Na(+)(out) + 3 H(+)(in). Na(+)/H(+) antiporter that extrudes sodium in exchange for external protons. This Proteus mirabilis (strain HI4320) protein is Na(+)/H(+) antiporter NhaB.